The sequence spans 76 residues: Protein OPG128 (76 aa).

Cys-17 and Cys-21 are oxidised to a cystine.

This sequence belongs to the orthopoxvirus OPG128 family. Interacts with sulfhydryl oxidase OPG072; this interaction involves formation of a transient disulfide-bonded intermediate, allowing disulfide bond transfer. Interacts with OPG088; this interaction involves formation of a transient disulfide-bonded intermediate, allowing disulfide bond transfer.

In terms of biological role, late protein which probably participates in disulfide bond formation by functioning as a thiol-disulfide transfer protein between membrane-associated OPG072 and OPG08. The complete pathway for formation of disulfide bonds in intracellular virion membrane proteins sequentially involves oxidation of OPG072, OPG128 and OPG08. This is Protein OPG128 (OPG128) from Variola virus (isolate Human/India/Ind3/1967) (VARV).